The primary structure comprises 444 residues: Serine--tRNA ligase (444 aa).

Residue 243–245 coordinates L-serine; that stretch reads TAE. ATP is bound at residue 274-276; it reads RSE. Glutamate 297 provides a ligand contact to L-serine. Residue 361–364 coordinates ATP; sequence EISS. Residue serine 397 coordinates L-serine.

Belongs to the class-II aminoacyl-tRNA synthetase family. Type-1 seryl-tRNA synthetase subfamily. Homodimer. The tRNA molecule binds across the dimer.

The protein localises to the cytoplasm. It catalyses the reaction tRNA(Ser) + L-serine + ATP = L-seryl-tRNA(Ser) + AMP + diphosphate + H(+). The catalysed reaction is tRNA(Sec) + L-serine + ATP = L-seryl-tRNA(Sec) + AMP + diphosphate + H(+). It functions in the pathway aminoacyl-tRNA biosynthesis; selenocysteinyl-tRNA(Sec) biosynthesis; L-seryl-tRNA(Sec) from L-serine and tRNA(Sec): step 1/1. Its function is as follows. Catalyzes the attachment of serine to tRNA(Ser). Is also able to aminoacylate tRNA(Sec) with serine, to form the misacylated tRNA L-seryl-tRNA(Sec), which will be further converted into selenocysteinyl-tRNA(Sec). This is Serine--tRNA ligase from Acidobacterium capsulatum (strain ATCC 51196 / DSM 11244 / BCRC 80197 / JCM 7670 / NBRC 15755 / NCIMB 13165 / 161).